A 249-amino-acid chain; its full sequence is 2,3-bisphosphoglycerate-dependent phosphoglycerate mutase (249 aa).

Substrate contacts are provided by residues 10-17 (RHGESEWN), 23-24 (TG), arginine 62, 89-92 (ERHY), lysine 100, 116-117 (RR), and 185-186 (GN). The active-site Tele-phosphohistidine intermediate is the histidine 11. Residue glutamate 89 is the Proton donor/acceptor of the active site.

This sequence belongs to the phosphoglycerate mutase family. BPG-dependent PGAM subfamily. Homodimer.

It carries out the reaction (2R)-2-phosphoglycerate = (2R)-3-phosphoglycerate. It functions in the pathway carbohydrate degradation; glycolysis; pyruvate from D-glyceraldehyde 3-phosphate: step 3/5. Functionally, catalyzes the interconversion of 2-phosphoglycerate and 3-phosphoglycerate. The sequence is that of 2,3-bisphosphoglycerate-dependent phosphoglycerate mutase from Hamiltonella defensa subsp. Acyrthosiphon pisum (strain 5AT).